A 453-amino-acid polypeptide reads, in one-letter code: DNA repair protein RadA (453 aa).

The C4-type zinc finger occupies 10 to 27 (CTECGATFPKWAGQCADC). 96–103 (GDPGIGKS) is a binding site for ATP. Positions 252–256 (KNRFG) match the RadA KNRFG motif motif. The tract at residues 351-453 (DVFLNVVGGV…LEQALDALFE (103 aa)) is lon-protease-like.

The protein belongs to the RecA family. RadA subfamily.

Functionally, DNA-dependent ATPase involved in processing of recombination intermediates, plays a role in repairing DNA breaks. Stimulates the branch migration of RecA-mediated strand transfer reactions, allowing the 3' invading strand to extend heteroduplex DNA faster. Binds ssDNA in the presence of ADP but not other nucleotides, has ATPase activity that is stimulated by ssDNA and various branched DNA structures, but inhibited by SSB. Does not have RecA's homology-searching function. This chain is DNA repair protein RadA, found in Pseudomonas aeruginosa (strain ATCC 15692 / DSM 22644 / CIP 104116 / JCM 14847 / LMG 12228 / 1C / PRS 101 / PAO1).